We begin with the raw amino-acid sequence, 472 residues long: Tryptophanase (472 aa).

An N6-(pyridoxal phosphate)lysine modification is found at Lys-270.

It belongs to the beta-eliminating lyase family. In terms of assembly, homotetramer. Pyridoxal 5'-phosphate serves as cofactor.

The enzyme catalyses L-tryptophan + H2O = indole + pyruvate + NH4(+). It participates in amino-acid degradation; L-tryptophan degradation via pyruvate pathway; indole and pyruvate from L-tryptophan: step 1/1. The sequence is that of Tryptophanase (tnaA) from Vibrio cholerae serotype O1 (strain ATCC 39315 / El Tor Inaba N16961).